Consider the following 154-residue polypeptide: Snaclec salmorin subunit A (154 aa).

The first 23 residues, 1-23 (MGRFIFVSFGLLVVFLSLSGTGA), serve as a signal peptide directing secretion. 3 cysteine pairs are disulfide-bonded: Cys-27–Cys-38, Cys-55–Cys-152, and Cys-127–Cys-144. The region spanning 34–153 (NNGHCYQAFN…CGQRNPFVCE (120 aa)) is the C-type lectin domain. Ca(2+) is bound by residues Ser-66, Glu-68, and Glu-72. Glu-153 is a Ca(2+) binding site.

This sequence belongs to the snaclec family. In terms of assembly, heterodimer of subunits A and B; disulfide-linked. As to expression, expressed by the venom gland.

It is found in the secreted. Inhibits thrombin-induced fibrinogen clotting and factor Xa-induced prothrombin activation. Binds to thrombin and prothrombin exosites. This chain is Snaclec salmorin subunit A, found in Gloydius brevicauda (Korean slamosa snake).